The primary structure comprises 695 residues: Nucleoprotein (695 aa).

Coiled-coil stretches lie at residues 316 to 341 and 372 to 399; these read VNVG…RRHE and QTLA…VEDQ. The segment at 424 to 611 is disordered; sequence QARPMNRPTA…SPSAPQEDTR (188 aa). Over residues 438-447 the composition is skewed to basic and acidic residues; the sequence is VDDKIEHEST. Polar residues-rich tracts occupy residues 495–505 and 537–552; these read RQSQDLNNSQG and TTDS…SDNE. The short motif at 603-606 is the PTAP/PSAP motif element; sequence PSAP.

The protein belongs to the filoviruses nucleoprotein family. As to quaternary structure, homooligomer. Homomultimerizes to form the nucleocapsid. Binds to viral genomic RNA. Interacts with VP35 and VP30 to form the nucleocapsid. Also interacts with VP24 and VP40. Post-translationally, phosphorylated.

The protein localises to the virion. Its subcellular location is the host cytoplasm. Its function is as follows. Encapsidates the genome, protecting it from nucleases. The encapsidated genomic RNA is termed the nucleocapsid and serves as template for transcription and replication. During replication, encapsidation by NP is coupled to RNA synthesis and all replicative products are resistant to nucleases. This chain is Nucleoprotein (NP), found in Chlorocebus aethiops (Green monkey).